Consider the following 121-residue polypeptide: Small ribosomal subunit protein bS6m (121 aa).

It belongs to the bacterial ribosomal protein bS6 family. Component of the mitochondrial ribosome small subunit (28S) which comprises a 12S rRNA and about 30 distinct proteins.

The protein localises to the mitochondrion. In Gallus gallus (Chicken), this protein is Small ribosomal subunit protein bS6m (MRPS6).